A 253-amino-acid chain; its full sequence is GTP cyclohydrolase III 2 (253 aa).

A disordered region spans residues 102–125 (LRDAGSAQDENRQEALSHRSPPGF).

Belongs to the archaeal-type GTP cyclohydrolase family.

It carries out the reaction GTP + 3 H2O = 2-amino-5-formylamino-6-(5-phospho-D-ribosylamino)pyrimidin-4(3H)-one + 2 phosphate + 2 H(+). Its function is as follows. Catalyzes the formation of 2-amino-5-formylamino-6-ribofuranosylamino-4(3H)-pyrimidinone ribonucleotide monophosphate and inorganic phosphate from GTP. Also has an independent pyrophosphate phosphohydrolase activity. The polypeptide is GTP cyclohydrolase III 2 (gch32) (Halobacterium salinarum (strain ATCC 700922 / JCM 11081 / NRC-1) (Halobacterium halobium)).